Reading from the N-terminus, the 420-residue chain is Phospholipase A1-II 3 (420 aa).

The N-terminal stretch at 1-21 (MCCFLLVSVLLATTLTDVASA) is a signal peptide. Asparagine 231 carries an N-linked (GlcNAc...) asparagine glycan. Serine 240 (acyl-ester intermediate) is an active-site residue. The active-site Charge relay system is the serine 240. Asparagine 294 carries an N-linked (GlcNAc...) asparagine glycan. Catalysis depends on charge relay system residues aspartate 305 and histidine 343. Residues 367 to 388 (VVDRDLALVNKEVDALRDEYQV) adopt a coiled-coil conformation. Asparagine 403 is a glycosylation site (N-linked (GlcNAc...) asparagine).

Belongs to the AB hydrolase superfamily. Lipase family.

Its subcellular location is the secreted. Acylhydrolase that catalyzes the hydrolysis of phospholipids at the sn-1 position. The polypeptide is Phospholipase A1-II 3 (Oryza sativa subsp. indica (Rice)).